Consider the following 233-residue polypeptide: uncharacterized protein (233 aa).

The next 3 helical transmembrane spans lie at 78–98, 113–133, and 188–208; these read FCLI…PVMY, FITC…LFKL, and FLLI…YGTI.

It is found in the membrane. This is an uncharacterized protein from Saccharomyces cerevisiae (strain ATCC 204508 / S288c) (Baker's yeast).